The chain runs to 186 residues: Signal peptidase complex catalytic subunit SEC11 (186 aa).

The Cytoplasmic portion of the chain corresponds to 1-20 (MDALGLSKLRHLKPRQLLSQ). Residues 21-41 (VLNFALILSTAFMLWKGLSVA) form a helical; Signal-anchor for type II membrane protein membrane-spanning segment. The Lumenal segment spans residues 42–186 (TDSPSPIVVV…MGLLVIVQRE (145 aa)). Catalysis depends on charge relay system residues Ser-55, His-102, and Asp-128. The C-terminal short (CTS) helix stretch occupies residues 172 to 183 (ALLGIMGLLVIV).

Belongs to the peptidase S26B family. As to quaternary structure, component of the signal peptidase complex (SPC) composed of a catalytic subunit SEC11 and three accessory subunits SPC1, SPC2 and SPC3. The complex induces a local thinning of the ER membrane which is used to measure the length of the signal peptide (SP) h-region of protein substrates. This ensures the selectivity of the complex towards h-regions shorter than 18-20 amino acids. SPC associates with the translocon complex.

Its subcellular location is the endoplasmic reticulum membrane. The enzyme catalyses Cleavage of hydrophobic, N-terminal signal or leader sequences from secreted and periplasmic proteins.. Functionally, catalytic component of the signal peptidase complex (SPC) which catalyzes the cleavage of N-terminal signal sequences from nascent proteins as they are translocated into the lumen of the endoplasmic reticulum. Specifically cleaves N-terminal signal peptides that contain a hydrophobic alpha-helix (h-region) shorter than 18-20 amino acids. The sequence is that of Signal peptidase complex catalytic subunit SEC11 (SEC11) from Tuber melanosporum (strain Mel28) (Perigord black truffle).